The following is a 48-amino-acid chain: Small, acid-soluble spore protein P (48 aa).

Residues 1 to 12 show a composition bias toward basic and acidic residues; the sequence is MTNKNDGKDMRK. The tract at residues 1 to 48 is disordered; sequence MTNKNDGKDMRKNAPKGAQPGQPEPLSGSKKVKNRNHTRQKHNSSHDM. Positions 30–48 are enriched in basic residues; sequence KKVKNRNHTRQKHNSSHDM.

Belongs to the SspP family.

The protein localises to the spore core. In Bacillus licheniformis (strain ATCC 14580 / DSM 13 / JCM 2505 / CCUG 7422 / NBRC 12200 / NCIMB 9375 / NCTC 10341 / NRRL NRS-1264 / Gibson 46), this protein is Small, acid-soluble spore protein P.